An 85-amino-acid polypeptide reads, in one-letter code: Defensin-like protein 76 (85 aa).

The N-terminal stretch at 1 to 27 (MQNQKHSHILTAITIVLLFAMAAKINA) is a signal peptide. Intrachain disulfides connect Cys35-Cys70, Cys40-Cys59, Cys44-Cys68, and Cys48-Cys69.

The protein belongs to the DEFL family.

Its subcellular location is the secreted. The polypeptide is Defensin-like protein 76 (LCR86) (Arabidopsis thaliana (Mouse-ear cress)).